We begin with the raw amino-acid sequence, 324 residues long: Olfactory receptor 5A2 (324 aa).

Over 1–26 the chain is Extracellular; sequence MAVGRNNTIVTKFILLGLSDHPQMKI. Asparagine 6 carries N-linked (GlcNAc...) asparagine glycosylation. Residues 27–47 form a helical membrane-spanning segment; it reads FLFMLFLGLYLLTLAWNLSLI. Residues 48–55 lie on the Cytoplasmic side of the membrane; the sequence is ALIKMDSH. The chain crosses the membrane as a helical span at residues 56–76; sequence LHMPMYFFLSNLSFLDICYVS. The Extracellular portion of the chain corresponds to 77-100; that stretch reads STAPKMLSDIITEQKTISFVGCAT. A disulfide bridge links cysteine 98 with cysteine 190. A helical transmembrane segment spans residues 101-121; the sequence is QYFVFCGMGLTECFLLAAMAY. Over 122 to 134 the chain is Cytoplasmic; it reads DRYAAICNPLLYT. Residues 135–155 traverse the membrane as a helical segment; the sequence is VLISHTLCLKMVVGAYVGGFL. Residues 156 to 197 are Extracellular-facing; that stretch reads SSFIETYSVYQHDFCGPYMINHFFCDLPPVLALSCSDTFTSE. The chain crosses the membrane as a helical span at residues 198 to 218; sequence VVTFIVSVVVGIVSVLVVLIS. The Cytoplasmic portion of the chain corresponds to 219–238; that stretch reads YGYIVAAVVKISSATGRTKA. The chain crosses the membrane as a helical span at residues 239–259; the sequence is FSTCASHLTAVTLFYGSGFFM. The Extracellular portion of the chain corresponds to 260–272; the sequence is YMRPSSSYSLNRD. A helical transmembrane segment spans residues 273–293; sequence KVVSIFYALVIPVVNPIIYSF. Residues 294-324 lie on the Cytoplasmic side of the membrane; sequence RNKEIKNAMRKAMERDPGISHGGPFIFMTLG.

Belongs to the G-protein coupled receptor 1 family.

It is found in the cell membrane. Its function is as follows. Odorant receptor. The chain is Olfactory receptor 5A2 (OR5A2) from Homo sapiens (Human).